Consider the following 502-residue polypeptide: Glycerol kinase (502 aa).

ADP is bound at residue threonine 15. Positions 15, 16, and 17 each coordinate ATP. Threonine 15 provides a ligand contact to sn-glycerol 3-phosphate. Arginine 19 is a binding site for ADP. The sn-glycerol 3-phosphate site is built by arginine 85, glutamate 86, and tyrosine 137. Glycerol contacts are provided by arginine 85, glutamate 86, and tyrosine 137. Histidine 233 carries the post-translational modification Phosphohistidine; by HPr. Residue aspartate 247 coordinates sn-glycerol 3-phosphate. Aspartate 247 and glutamine 248 together coordinate glycerol. Residues threonine 269 and glycine 312 each contribute to the ADP site. Threonine 269, glycine 312, glutamine 316, and glycine 413 together coordinate ATP. Positions 413 and 417 each coordinate ADP.

This sequence belongs to the FGGY kinase family. As to quaternary structure, homotetramer and homodimer (in equilibrium). Post-translationally, the phosphoenolpyruvate-dependent sugar phosphotransferase system (PTS), including enzyme I, and histidine-containing protein (HPr) are required for the phosphorylation, which leads to the activation of the enzyme.

The catalysed reaction is glycerol + ATP = sn-glycerol 3-phosphate + ADP + H(+). The protein operates within polyol metabolism; glycerol degradation via glycerol kinase pathway; sn-glycerol 3-phosphate from glycerol: step 1/1. With respect to regulation, activated by phosphorylation and inhibited by fructose 1,6-bisphosphate (FBP). Functionally, key enzyme in the regulation of glycerol uptake and metabolism. Catalyzes the phosphorylation of glycerol to yield sn-glycerol 3-phosphate. In Streptococcus agalactiae serotype Ia (strain ATCC 27591 / A909 / CDC SS700), this protein is Glycerol kinase.